Here is a 49-residue protein sequence, read N- to C-terminus: Beta-toxin Rc1 (49 aa).

3 disulfides stabilise this stretch: Cys-15–Cys-31, Cys-22–Cys-40, and Cys-26–Cys-42.

The protein belongs to the long (4 C-C) scorpion toxin superfamily. Sodium channel inhibitor family. Beta subfamily. In terms of tissue distribution, expressed by the venom gland.

It is found in the secreted. In terms of biological role, beta toxins bind voltage-independently at site-4 of sodium channels (Nav) and shift the voltage of activation toward more negative potentials thereby affecting sodium channel activation and promoting spontaneous and repetitive firing. This toxin acts on X.laevis Nav1.6/SCN8A and insect BgNav1 channels, and also displays a small but significant effect on X.laevis Nav1.4/SCN4A channels. In mice induces nociception (licking and lifting behaviors) during the first 15 minutes after injection, and increases the release of TNF-alpha in J774.1 cells. The polypeptide is Beta-toxin Rc1 (Rhopalurus crassicauda (Scorpion)).